Consider the following 386-residue polypeptide: Lipid-A-disaccharide synthase (386 aa).

This sequence belongs to the LpxB family.

It carries out the reaction a lipid X + a UDP-2-N,3-O-bis[(3R)-3-hydroxyacyl]-alpha-D-glucosamine = a lipid A disaccharide + UDP + H(+). The protein operates within bacterial outer membrane biogenesis; LPS lipid A biosynthesis. In terms of biological role, condensation of UDP-2,3-diacylglucosamine and 2,3-diacylglucosamine-1-phosphate to form lipid A disaccharide, a precursor of lipid A, a phosphorylated glycolipid that anchors the lipopolysaccharide to the outer membrane of the cell. In Chromobacterium violaceum (strain ATCC 12472 / DSM 30191 / JCM 1249 / CCUG 213 / NBRC 12614 / NCIMB 9131 / NCTC 9757 / MK), this protein is Lipid-A-disaccharide synthase.